The sequence spans 211 residues: Dibenzothiophene metabolism operon protein DoxH (211 aa).

It functions in the pathway aromatic compound metabolism; naphthalene degradation. Its function is as follows. May be involved in the conversion of 2-hydroxy-4-(2'-oxo-3,5-cyclohexadienyl)-buta-2,4-dienoate to cis-O-hydroxybenzylidenepyruvate. DoxH and doxJ encode different enzymes that may have interchangeable functions. The polypeptide is Dibenzothiophene metabolism operon protein DoxH (doxH) (Pseudomonas sp. (strain C18)).